The chain runs to 353 residues: Photosystem II D2 protein (353 aa).

Residue threonine 2 is modified to N-acetylthreonine. Threonine 2 bears the Phosphothreonine mark. A helical membrane pass occupies residues 41–61; it reads CAYFALGGWFTGTTFVTSWYT. Histidine 118 serves as a coordination point for chlorophyll a. Residues 125-141 traverse the membrane as a helical segment; it reads GFMLRQFELARSVQLRP. Glutamine 130 and asparagine 143 together coordinate pheophytin a. A helical membrane pass occupies residues 153-166; it reads VFVSVFLIYPLGQS. Histidine 198 is a chlorophyll a binding site. Residues 208-228 traverse the membrane as a helical segment; that stretch reads AALLCAIHGATVENTLFEDGD. A plastoquinone-binding residues include histidine 215 and phenylalanine 262. Fe cation is bound at residue histidine 215. Histidine 269 contributes to the Fe cation binding site. A helical membrane pass occupies residues 279–295; it reads GLWMSALGVVGLALNLR.

This sequence belongs to the reaction center PufL/M/PsbA/D family. In terms of assembly, PSII is composed of 1 copy each of membrane proteins PsbA, PsbB, PsbC, PsbD, PsbE, PsbF, PsbH, PsbI, PsbJ, PsbK, PsbL, PsbM, PsbT, PsbX, PsbY, PsbZ, Psb30/Ycf12, at least 3 peripheral proteins of the oxygen-evolving complex and a large number of cofactors. It forms dimeric complexes. The D1/D2 heterodimer binds P680, chlorophylls that are the primary electron donor of PSII, and subsequent electron acceptors. It shares a non-heme iron and each subunit binds pheophytin, quinone, additional chlorophylls, carotenoids and lipids. There is also a Cl(-1) ion associated with D1 and D2, which is required for oxygen evolution. The PSII complex binds additional chlorophylls, carotenoids and specific lipids. serves as cofactor.

It localises to the plastid. Its subcellular location is the chloroplast thylakoid membrane. It carries out the reaction 2 a plastoquinone + 4 hnu + 2 H2O = 2 a plastoquinol + O2. Photosystem II (PSII) is a light-driven water:plastoquinone oxidoreductase that uses light energy to abstract electrons from H(2)O, generating O(2) and a proton gradient subsequently used for ATP formation. It consists of a core antenna complex that captures photons, and an electron transfer chain that converts photonic excitation into a charge separation. The D1/D2 (PsbA/PsbD) reaction center heterodimer binds P680, the primary electron donor of PSII as well as several subsequent electron acceptors. D2 is needed for assembly of a stable PSII complex. The polypeptide is Photosystem II D2 protein (Barbarea verna (Land cress)).